The primary structure comprises 528 residues: Movement protein TGB1 (528 aa).

The segment covering 1–13 (MDMTKTVEEKKTN) has biased composition (basic and acidic residues). The segment at 1 to 143 (MDMTKTVEEK…TKGSSQVGEN (143 aa)) is disordered. 2 tandem repeats follow at residues 52–77 (VADQ…QVPG) and 78–103 (VADQ…QVPG). The interval 52–103 (VADQTPLSVDNGAKSKLDSSDRQVPGVADQTPLSVDNGAKSKLDSSDRQVPG) is 2 X 26 AA tandem repeats. The interaction with the suppressor of RNA silencing Gamma-B stretch occupies residues 75–491 (VPGVADQTPL…KSKLIIRADA (417 aa)). Over residues 109-119 (NVKKSKKKRIQ) the composition is skewed to basic residues. The nucleolar localization signal stretch occupies residues 111–120 (KKSKKKRIQK). Positions 236–379 (ARACTLERER…YLTLPVIYRS (144 aa)) constitute a (+)RNA virus helicase ATP-binding domain. The segment at 243–254 (RERLKRKLLLVR) is nuclear localization signal. 269-276 (GVPGSGKS) is an ATP binding site. Positions 380-520 (ETTYRLGQET…SHRYSAKPDE (141 aa)) constitute a (+)RNA virus helicase C-terminal domain. Positions 508 to 528 (ASNSHRYSAKPDEDHSWFKAK) are disordered. Residues 516–528 (AKPDEDHSWFKAK) show a composition bias toward basic and acidic residues.

Belongs to the virgaviridae/benyvirus TGB1 movement protein family. As to quaternary structure, homooligomer. Interacts with movement protein TGB3. TGB1-TGB3-TGB2 complex formation is enhanced by ATP hydrolysis. Interacts with the suppressor of RNA silencing Gamma-B (via N-terminus). It depends on Mg(2+) as a cofactor.

It is found in the host cell junction. The protein resides in the host plasmodesma. It localises to the host nucleus. Its subcellular location is the host cytoplasm. The protein localises to the host nucleolus. It is found in the host cytoskeleton. It carries out the reaction ATP + H2O = ADP + phosphate + H(+). ATPase activity is enhanced by the suppressor of RNA silencing Gamma-B. Functionally, participates in the transport of viral genome to neighboring plant cells directly through plasmodesmata, without any budding. Multifunctional movement protein with RNA-binding, ATPase and helicase activities. Engages in homologous interactions leading to the formation of a ribonucleoprotein complex containing plus-sense viral RNAs (vRNPs). ATPase activity is probably required for vRNPs movement complex assembly. Intracellular delivery of TGBp1-containing vRNPs to plasmodesmata is facilitated by TGBp2 and TGBp3. The protein is Movement protein TGB1 of Barley stripe mosaic virus (BSMV).